Here is a 333-residue protein sequence, read N- to C-terminus: MNWIQLAQEVIEGKRISENEALAILNSPDDELLLLLQGAFTIRQTYYGKKVKLNMIMNAKSGFCPENCGYCSQSSISKAPIDAYPMVNKETILEGAKRAHELNVGTYCIVASGRGPTNRDIDHVTEAVREIKDTYGLKICACLGILKPEQAEQLKAAGVDRYNHNVNTSARHHDQITTSHTYEDRVNTVEVVKHSGISPCSGVIVGMKETKEDVVDMAFQLRELDADSIPVNFLHAIDGTPLQGVHELTPIYCLKVLSLFRYVCPTKEIRISGGREVNLKSLQPLGLYAANSIFIGDYLTTAGQEETADHQILKDLGFEVESVEEMKASLQGQ.

The 230-residue stretch at 46-275 folds into the Radical SAM core domain; sequence YYGKKVKLNM…TKEIRISGGR (230 aa). Residues Cys-64, Cys-68, and Cys-71 each coordinate [4Fe-4S] cluster. Cys-108, Cys-140, Cys-200, and Arg-270 together coordinate [2Fe-2S] cluster.

This sequence belongs to the radical SAM superfamily. Biotin synthase family. As to quaternary structure, homodimer. It depends on [4Fe-4S] cluster as a cofactor. [2Fe-2S] cluster is required as a cofactor.

It catalyses the reaction (4R,5S)-dethiobiotin + (sulfur carrier)-SH + 2 reduced [2Fe-2S]-[ferredoxin] + 2 S-adenosyl-L-methionine = (sulfur carrier)-H + biotin + 2 5'-deoxyadenosine + 2 L-methionine + 2 oxidized [2Fe-2S]-[ferredoxin]. It functions in the pathway cofactor biosynthesis; biotin biosynthesis; biotin from 7,8-diaminononanoate: step 2/2. Functionally, catalyzes the conversion of dethiobiotin (DTB) to biotin by the insertion of a sulfur atom into dethiobiotin via a radical-based mechanism. This chain is Biotin synthase, found in Halalkalibacterium halodurans (strain ATCC BAA-125 / DSM 18197 / FERM 7344 / JCM 9153 / C-125) (Bacillus halodurans).